Here is a 388-residue protein sequence, read N- to C-terminus: Lipoyl synthase, mitochondrial (388 aa).

Residues 1 to 18 (MRLTTVQRRFLVSTKAKV) constitute a mitochondrion transit peptide. Positions 22–39 (SISSTANTGSASAGAPNG) are enriched in low complexity. Residues 22–43 (SISSTANTGSASAGAPNGQTRR) form a disordered region. Residues cysteine 120, cysteine 125, cysteine 131, cysteine 151, cysteine 155, cysteine 158, and serine 366 each coordinate [4Fe-4S] cluster. A Radical SAM core domain is found at 134-355 (GKDKSKATAT…KDKAKEMGFL (222 aa)).

It belongs to the radical SAM superfamily. Lipoyl synthase family. [4Fe-4S] cluster is required as a cofactor.

The protein resides in the mitochondrion. It carries out the reaction [[Fe-S] cluster scaffold protein carrying a second [4Fe-4S](2+) cluster] + N(6)-octanoyl-L-lysyl-[protein] + 2 oxidized [2Fe-2S]-[ferredoxin] + 2 S-adenosyl-L-methionine + 4 H(+) = [[Fe-S] cluster scaffold protein] + N(6)-[(R)-dihydrolipoyl]-L-lysyl-[protein] + 4 Fe(3+) + 2 hydrogen sulfide + 2 5'-deoxyadenosine + 2 L-methionine + 2 reduced [2Fe-2S]-[ferredoxin]. It participates in protein modification; protein lipoylation via endogenous pathway; protein N(6)-(lipoyl)lysine from octanoyl-[acyl-carrier-protein]: step 2/2. In terms of biological role, catalyzes the radical-mediated insertion of two sulfur atoms into the C-6 and C-8 positions of the octanoyl moiety bound to the lipoyl domains of lipoate-dependent enzymes, thereby converting the octanoylated domains into lipoylated derivatives. This is Lipoyl synthase, mitochondrial from Candida glabrata (strain ATCC 2001 / BCRC 20586 / JCM 3761 / NBRC 0622 / NRRL Y-65 / CBS 138) (Yeast).